The chain runs to 246 residues: Acetoacetate decarboxylase (246 aa).

Residue lysine 116 is the Schiff-base intermediate with acetoacetate of the active site.

It belongs to the ADC family.

The enzyme catalyses acetoacetate + H(+) = acetone + CO2. Functionally, catalyzes the conversion of acetoacetate to acetone and carbon dioxide. The polypeptide is Acetoacetate decarboxylase (Burkholderia ambifaria (strain MC40-6)).